Here is a 129-residue protein sequence, read N- to C-terminus: Phosphoribosyl-AMP cyclohydrolase (129 aa).

D85 contributes to the Mg(2+) binding site. C86 serves as a coordination point for Zn(2+). Positions 87 and 89 each coordinate Mg(2+). Positions 102 and 109 each coordinate Zn(2+).

This sequence belongs to the PRA-CH family. In terms of assembly, homodimer. Mg(2+) serves as cofactor. The cofactor is Zn(2+).

Its subcellular location is the cytoplasm. It carries out the reaction 1-(5-phospho-beta-D-ribosyl)-5'-AMP + H2O = 1-(5-phospho-beta-D-ribosyl)-5-[(5-phospho-beta-D-ribosylamino)methylideneamino]imidazole-4-carboxamide. Its pathway is amino-acid biosynthesis; L-histidine biosynthesis; L-histidine from 5-phospho-alpha-D-ribose 1-diphosphate: step 3/9. Functionally, catalyzes the hydrolysis of the adenine ring of phosphoribosyl-AMP. In Methanococcus maripaludis (strain C7 / ATCC BAA-1331), this protein is Phosphoribosyl-AMP cyclohydrolase.